Here is a 450-residue protein sequence, read N- to C-terminus: Putative serine/threonine-protein kinase R517/R518 (450 aa).

Positions 9–290 (KMTDTVLGKG…WSELFHHYWF (282 aa)) constitute a Protein kinase domain. ATP is bound by residues 15 to 23 (LGKGGFSEV) and Lys-38. Asp-140 (proton acceptor) is an active-site residue.

Belongs to the protein kinase superfamily. Ser/Thr protein kinase family.

The catalysed reaction is L-seryl-[protein] + ATP = O-phospho-L-seryl-[protein] + ADP + H(+). It catalyses the reaction L-threonyl-[protein] + ATP = O-phospho-L-threonyl-[protein] + ADP + H(+). This is Putative serine/threonine-protein kinase R517/R518 from Acanthamoeba polyphaga mimivirus (APMV).